Consider the following 569-residue polypeptide: MDSSTATAMTAPFIDPTDHVNLKTDTDASENRRMGNYKPSIWNYDFLQSLATHHNIVEERHLKLAEKLKGQVKFMFGAPMEPLAKLELVDVVQRLGLNHLFETEIKEVLFSIYKDGSNGWWFDHLHATSLRFRLLRQCGLFIPQDVFKMFQNKTGELDMKLCDNVKGLLSLYEASYLGWKGENILDEAKAFATKYLKSAWENISEKWLAKRVKHALALPLHWRVPRIEARWFIEAYEQEANMNPTLLKLAKLDFNMVQSIHQKEIGELARWWVTTGLDKLAFARNNLLQSYMWSCAIASDPKFKLARETIVEIGSVLTVVDDAYDVYGSMDELDLYTSSVERWSCVEIDKLPNTLKLIFMSMFNKTNEVGLRVQHERGYNSIPTFIKAWVQQCKSYQKEARWFHGGHTPPLEEYSLNGLVSIGFPLLLITGYVAIAENEAALDKVHPLPDLLHYSSLLSRLINDIGTSPDEMARGDNLKSIHCYMNETGASEEVAREHIKGVIEENWKILNQCCFDQSQFQEPFITFNLNSVRGSHFFYEFGDGFGVTDSWTKVDMKSVLIDPIPLGEE.

Positions 284, 321, 325, 460, and 463 each coordinate (2E)-geranyl diphosphate. 2 residues coordinate Mg(2+): Asp321 and Asp325. The DDXXD motif signature appears at 321-325 (DDAYD). The Mg(2+) site is built by Asn463, Thr467, and Glu471.

It belongs to the terpene synthase family. Tpsb subfamily. The cofactor is Mg(2+). Mn(2+) serves as cofactor.

Its function is as follows. Catalyzes the formation of santalene. In Santalum murrayanum (Bitter quandong), this protein is Probable santalene synthase (SSY).